A 539-amino-acid chain; its full sequence is NADH-quinone oxidoreductase subunit N 2 (539 aa).

The next 13 helical transmembrane spans lie at 11-31, 52-72, 106-126, 141-161, 193-213, 248-268, 296-316, 329-349, 357-377, 385-405, 429-449, 462-484, and 500-520; these read LIPEFLLLAIAAMVLLGDVLT, LMGLGLAFVMVLIQGGFFSWM, PLTHIGRLVFIGAAFVTVILT, LILFATLGMIFMTAGGELIMI, YIFGALSSAILLFGMSLLLGL, GVAILALLFILAGMAYKVAIV, AGFFLLYRVLVTGFGAPSILG, WTSLIAILAALTMLVGNLAAL, MLAYSSIAQAGFLMLGLVGTQ, LMYLIAYTVTNLSAFGILALV, LLLTVAILSLAGIPPLSGFFV, AKWLVIFAVSNTVISLYYYLRFL, and VGFGPGIVMTAITLLIFGLGI.

It belongs to the complex I subunit 2 family. As to quaternary structure, NDH-1 is composed of 14 different subunits. Subunits NuoA, H, J, K, L, M, N constitute the membrane sector of the complex.

The protein localises to the cell membrane. It carries out the reaction a quinone + NADH + 5 H(+)(in) = a quinol + NAD(+) + 4 H(+)(out). Functionally, NDH-1 shuttles electrons from NADH, via FMN and iron-sulfur (Fe-S) centers, to quinones in the respiratory chain. The immediate electron acceptor for the enzyme in this species is believed to be ubiquinone. Couples the redox reaction to proton translocation (for every two electrons transferred, four hydrogen ions are translocated across the cytoplasmic membrane), and thus conserves the redox energy in a proton gradient. The chain is NADH-quinone oxidoreductase subunit N 2 from Herpetosiphon aurantiacus (strain ATCC 23779 / DSM 785 / 114-95).